The sequence spans 474 residues: tRNA-2-methylthio-N(6)-dimethylallyladenosine synthase (474 aa).

An MTTase N-terminal domain is found at 3-120; that stretch reads KKLHIKTWGC…LPEMINHVQG (118 aa). Residues Cys-12, Cys-49, Cys-83, Cys-157, Cys-161, and Cys-164 each contribute to the [4Fe-4S] cluster site. The Radical SAM core domain maps to 143 to 375; it reads RAEGPTAFVS…QQRISQQAME (233 aa). In terms of domain architecture, TRAM spans 378–441; sequence RKMVGTVQRV…ASSLRGILLR (64 aa).

Belongs to the methylthiotransferase family. MiaB subfamily. In terms of assembly, monomer. [4Fe-4S] cluster is required as a cofactor.

The protein localises to the cytoplasm. It catalyses the reaction N(6)-dimethylallyladenosine(37) in tRNA + (sulfur carrier)-SH + AH2 + 2 S-adenosyl-L-methionine = 2-methylsulfanyl-N(6)-dimethylallyladenosine(37) in tRNA + (sulfur carrier)-H + 5'-deoxyadenosine + L-methionine + A + S-adenosyl-L-homocysteine + 2 H(+). In terms of biological role, catalyzes the methylthiolation of N6-(dimethylallyl)adenosine (i(6)A), leading to the formation of 2-methylthio-N6-(dimethylallyl)adenosine (ms(2)i(6)A) at position 37 in tRNAs that read codons beginning with uridine. This is tRNA-2-methylthio-N(6)-dimethylallyladenosine synthase from Yersinia pestis bv. Antiqua (strain Antiqua).